The following is a 457-amino-acid chain: MEPITVIGGGLAGTEAAWQIARAGLPVVLYEMRPQVASPAHHTAELAELVCSNSFGAKASDRATGLLHHELRALGSLIIATADRHQVPAGGALAVDRAHFSRELTETLENHPLVTVRREELPHLPESGIVVLATGPLTSEALSADLQCFTGLDYLSFFDAASPIVVGESINREVAFLASRYDRGEAAYLNCPFSAEEYQRFWQALCEAKQAPLKDFERENAQFFEACLPVEELARRGVDTLRFGPLKPVGLRDPRTGERPYAVAQLRQEDRHGQLWNLVGFQTNLRWGEQQRVFRMIPGLEQAEFVRMGVMHRNTFLNAPKLLKASLQFRDRPTLLAAGQITGTEGYTAAAAGGWLAGTNAARLARGLAPLVLPPTTMAGALFHYISTAESKTFQPMPPNFGILPPLEQPVRQKALRYAAYRDRALKDLSTWATAMSLPLQPLALDGCDPAAVEAGA.

Gly-8 to Gly-13 contacts FAD.

The protein belongs to the MnmG family. TrmFO subfamily. The cofactor is FAD.

The protein resides in the cytoplasm. It catalyses the reaction uridine(54) in tRNA + (6R)-5,10-methylene-5,6,7,8-tetrahydrofolate + NADH + H(+) = 5-methyluridine(54) in tRNA + (6S)-5,6,7,8-tetrahydrofolate + NAD(+). The enzyme catalyses uridine(54) in tRNA + (6R)-5,10-methylene-5,6,7,8-tetrahydrofolate + NADPH + H(+) = 5-methyluridine(54) in tRNA + (6S)-5,6,7,8-tetrahydrofolate + NADP(+). Catalyzes the folate-dependent formation of 5-methyl-uridine at position 54 (M-5-U54) in all tRNAs. In Thermosynechococcus vestitus (strain NIES-2133 / IAM M-273 / BP-1), this protein is Methylenetetrahydrofolate--tRNA-(uracil-5-)-methyltransferase TrmFO.